The following is a 554-amino-acid chain: MSEAEARPTNFIRQIIDEDLASGKHTTVHTRFPPEPNGYLHIGHAKSICLNFGIAQDYKGQCNLRFDDTNPVKEDIEYVESIKNDVEWLGFHWSGNVRYSSDYFDQLHAYAIELINKGLAYVDELTPEQIREYRGTLTQPGKNSPYRDRSVEENLALFEKMRAGGFEEGKACLRAKIDMASPFIVMRDPVLYRIKFAEHHQTGNKWCIYPMYDFTHCISDALEGITHSLCTLEFQDNRRLYDWVLDNITIPVHPRQYEFSRLNLEYTVMSKRKLNLLVTDKHVEGWDDPRMPTISGLRRRGYTAASIREFCKRIGVTRQDNTIEMASLESCIREDLNENAPRAMAVIDPVKLVIENYQGEGEMVTMPNHPNKPEMGSRQVPFSSEIWIDRADFREEANKQYKRLVLGKEVRLRNAYVIKAERVEKDAEGNITTIFCTYDADTLSKDPADGRKVKGVIHWVSAAHALPVEIRLYDRLFSVPNPGAADDFLSVINPESLVIKQGFAEPSLKDAVAGKAFQFEREGYFCLDSRHSTAEKPVFNRTVGLRDTWAKVGE.

Positions 34-44 (PEPNGYLHIGH) match the 'HIGH' region motif. ATP contacts are provided by residues 35–37 (EPN) and 41–47 (HIGHAKS). The L-glutamine site is built by D67 and Y212. ATP-binding positions include T231, 261 to 262 (RL), and 269 to 271 (MSK). The short motif at 268–272 (VMSKR) is the 'KMSKS' region element.

This sequence belongs to the class-I aminoacyl-tRNA synthetase family. In terms of assembly, monomer.

The protein resides in the cytoplasm. The enzyme catalyses tRNA(Gln) + L-glutamine + ATP = L-glutaminyl-tRNA(Gln) + AMP + diphosphate. In Shigella boydii serotype 4 (strain Sb227), this protein is Glutamine--tRNA ligase.